A 524-amino-acid chain; its full sequence is Cytochrome P450 monooxygenase drtD (524 aa).

Residues 2 to 22 (SDTYLVAASGLAVCFFVLYLL) traverse the membrane as a helical segment. C418 serves as a coordination point for heme.

The protein belongs to the cytochrome P450 family. Heme serves as cofactor.

It is found in the membrane. It functions in the pathway secondary metabolite biosynthesis; terpenoid biosynthesis. Its function is as follows. Cytochrome P450 monooxygenase; part of the gene cluster that mediates the biosynthesis of various drimane-type sesquiterpene esters, compounds that exhibit diverse biological activities and are widely present in eukaryotes. The pathway begins with the synthesis of the backbone drimenol by the terpene cyclase drtB using farnesyl pyrophosphate (FPP) as substrate. The cytochrome P450 monooxygenase drtD is then responsible for the hydroxylations at C-6, C-9 and C-12, as well as the oxidation of hydroxyl groups at C-6 and C-11 to a ketone and an aldehyde, respectively. Then, the biosynthesis can go in two directions, either the hydroxylated drimenol is further hydroxylated at C-2 and C-3 by an enzyme(s) not associated with the drt cluster, or the FAD-binding oxidoreductase drtC further oxidizes C-11 or C-12 to form the butyrolactone ring. DrtB, drtD and drtC are solely responsible for the formation of the different drimane structures observed during drimane sesquiterpenes biosynthesis. The polyketide synthase drtA synthesizes different lengths (C6 and C8) of PKS chains, which are then oxidized to varying degrees by the short-chain dehydrogenase drtF. Finally, these PKS chains are transferred onto drimane sesquiterpenes by the acyltransferase drtE, forming the sesquiterpene esters. In addition to the different fatty acyl-CoA chains produced by drtA, drtE is also able to use cinnamoyl-CoA as a substrate. The chain is Cytochrome P450 monooxygenase drtD from Aspergillus calidoustus.